A 253-amino-acid chain; its full sequence is 3-deoxy-manno-octulosonate cytidylyltransferase (253 aa).

Belongs to the KdsB family.

It localises to the cytoplasm. It carries out the reaction 3-deoxy-alpha-D-manno-oct-2-ulosonate + CTP = CMP-3-deoxy-beta-D-manno-octulosonate + diphosphate. Its pathway is nucleotide-sugar biosynthesis; CMP-3-deoxy-D-manno-octulosonate biosynthesis; CMP-3-deoxy-D-manno-octulosonate from 3-deoxy-D-manno-octulosonate and CTP: step 1/1. It functions in the pathway bacterial outer membrane biogenesis; lipopolysaccharide biosynthesis. Its function is as follows. Activates KDO (a required 8-carbon sugar) for incorporation into bacterial lipopolysaccharide in Gram-negative bacteria. The polypeptide is 3-deoxy-manno-octulosonate cytidylyltransferase (Neisseria meningitidis serogroup C / serotype 2a (strain ATCC 700532 / DSM 15464 / FAM18)).